Reading from the N-terminus, the 1147-residue chain is ATP-dependent helicase/deoxyribonuclease subunit B (1147 aa).

8–15 is a binding site for ATP; that stretch reads GRAGSGKS. [4Fe-4S] cluster contacts are provided by Cys-786, Cys-1106, Cys-1109, and Cys-1115.

The protein belongs to the helicase family. AddB/RexB type 1 subfamily. Heterodimer of AddA and AddB. Mg(2+) serves as cofactor. It depends on [4Fe-4S] cluster as a cofactor.

Functionally, the heterodimer acts as both an ATP-dependent DNA helicase and an ATP-dependent, dual-direction single-stranded exonuclease. Recognizes the chi site generating a DNA molecule suitable for the initiation of homologous recombination. The AddB subunit has 5' -&gt; 3' nuclease activity but not helicase activity. The protein is ATP-dependent helicase/deoxyribonuclease subunit B of Clostridium botulinum (strain Loch Maree / Type A3).